Here is a 426-residue protein sequence, read N- to C-terminus: MKHLTEMVRQHKAGKTNGIYAVCSAHPLVLEAAIRYASANQTPLLIEATSNQVDQFGGYTGMTPADFRGFVCQLADSLNFPQDALILGGDHLGPNRWQNLPAAQAMANADDLIKSYVAAGFKKIHLDCSMSCQDDPIPLTDDIVAERAARLAKVAEETCLEHFGEADLEYVIGTEVPVPGGAHETLSELAVTTPDAARATLEAHRHAFEKQGLNAIWPRIIALVVQPGVEFDHTNVIDYQPAKATXLSQMXENYETLIFEAHSTDYQTPQSLRQLVIDHFAILKVGPALTFALREALFSLAAIEEELVPAKACSGLRQVLENVMLDRPEYWQSHYHGDGNARRLARGYSYSDRVRYYWPDSQIDDAFAHLVRNLADSPIPLPLISQYLPLQYVKVRSGELQPTPRELIINHIQDILAQYHTACEGQ.

It belongs to the GatZ/KbaZ family. KbaZ subfamily. Forms a complex with KbaY.

Its pathway is carbohydrate metabolism; D-tagatose 6-phosphate degradation; D-glyceraldehyde 3-phosphate and glycerone phosphate from D-tagatose 6-phosphate: step 2/2. Functionally, component of the tagatose-1,6-bisphosphate aldolase KbaYZ that is required for full activity and stability of the Y subunit. Could have a chaperone-like function for the proper and stable folding of KbaY. When expressed alone, KbaZ does not show any aldolase activity. This Escherichia coli O6:H1 (strain CFT073 / ATCC 700928 / UPEC) protein is D-tagatose-1,6-bisphosphate aldolase subunit KbaZ.